We begin with the raw amino-acid sequence, 88 residues long: Small ribosomal subunit protein uS15c (88 aa).

Belongs to the universal ribosomal protein uS15 family. As to quaternary structure, part of the 30S ribosomal subunit.

The protein resides in the plastid. The protein localises to the chloroplast. The polypeptide is Small ribosomal subunit protein uS15c (rps15) (Aethionema cordifolium (Lebanon stonecress)).